We begin with the raw amino-acid sequence, 659 residues long: UDP-glucuronate:xylan alpha-glucuronosyltransferase 1 (659 aa).

Residues 1-14 are compositionally biased toward low complexity; it reads MANSPAAPAPTTTT. The interval 1–20 is disordered; that stretch reads MANSPAAPAPTTTTGGDSRR. The chain crosses the membrane as a helical; Signal-anchor for type II membrane protein span at residues 70–90; the sequence is FQIVKLLLFILLSATLFTIIY. Mn(2+)-binding residues include D416 and D418. Residues 416–418, 445–447, 472–476, and 526–531 each bind substrate; these read DAD, NSG, NGGDQ, and HYLGMK. H526 is a binding site for Mn(2+).

The protein belongs to the glycosyltransferase 8 family. Glycogenin subfamily. The cofactor is Mn(2+).

The protein localises to the golgi apparatus membrane. Its function is as follows. Glycosyltransferase required for the addition of both glucuronic acid and 4-O-methylglucuronic acid branches to xylan in stem cell walls. In association with GUX2, is responsible for almost all of the substitutions of the xylan backbone in stem glucuronoxylan. This chain is UDP-glucuronate:xylan alpha-glucuronosyltransferase 1 (GUX1), found in Arabidopsis thaliana (Mouse-ear cress).